Here is a 288-residue protein sequence, read N- to C-terminus: uncharacterized protein (288 aa).

It to M.bovis Mb1522c, M.leprae ML1804 and M.avium MAV321.

This is an uncharacterized protein from Mycobacterium tuberculosis (strain ATCC 25618 / H37Rv).